The primary structure comprises 27 residues: Flagellar filament 31.5 kDa core protein (27 aa).

The protein belongs to the bacterial flagellin family. In terms of assembly, the flagellum consists of an outer layer composed of repeating units of FlaA around a core that contains one or all of five antigenically related polypeptides.

It localises to the periplasmic flagellum. It is found in the periplasm. Its function is as follows. Component of the core of the flagella. The sequence is that of Flagellar filament 31.5 kDa core protein from Spirochaeta aurantia.